Reading from the N-terminus, the 255-residue chain is 5'-nucleotidase SurE (255 aa).

A divalent metal cation is bound by residues Asp8, Asp9, Ser40, and Asn92.

The protein belongs to the SurE nucleotidase family. Requires a divalent metal cation as cofactor.

Its subcellular location is the cytoplasm. It carries out the reaction a ribonucleoside 5'-phosphate + H2O = a ribonucleoside + phosphate. Nucleotidase that shows phosphatase activity on nucleoside 5'-monophosphates. The polypeptide is 5'-nucleotidase SurE (Brucella canis (strain ATCC 23365 / NCTC 10854 / RM-666)).